Here is a 670-residue protein sequence, read N- to C-terminus: Probable ATP-citrate synthase subunit 1 (670 aa).

Positions 1-22 (MPSATTASTNGANGASASPAPG) are disordered. ATP-binding positions include 257–277 (LLRY…EVGG) and 308–334 (FKTE…KNKS). Glu274 is a Mg(2+) binding site. Residue His316 is the Tele-phosphohistidine intermediate of the active site. 335–345 (MREAGFYVPDT) contributes to the CoA binding site.

The protein belongs to the succinate/malate CoA ligase alpha subunit family. In terms of assembly, composed of two subunits.

Its subcellular location is the cytoplasm. It catalyses the reaction oxaloacetate + acetyl-CoA + ADP + phosphate = citrate + ATP + CoA. Its function is as follows. Catalyzes the formation of cytosolic acetyl-CoA, which is mainly used for the biosynthesis of fatty acids and sterols. The sequence is that of Probable ATP-citrate synthase subunit 1 from Neurospora crassa (strain ATCC 24698 / 74-OR23-1A / CBS 708.71 / DSM 1257 / FGSC 987).